We begin with the raw amino-acid sequence, 286 residues long: NADPH-dependent 7-cyano-7-deazaguanine reductase (286 aa).

Ile92–Ser94 serves as a coordination point for substrate. Position 94–95 (Ser94–Lys95) interacts with NADPH. The active-site Thioimide intermediate is Cys194. Asp201 acts as the Proton donor in catalysis. His233–Glu234 is a substrate binding site. Arg262–Gly263 serves as a coordination point for NADPH.

Belongs to the GTP cyclohydrolase I family. QueF type 2 subfamily. Homodimer.

Its subcellular location is the cytoplasm. The enzyme catalyses 7-aminomethyl-7-carbaguanine + 2 NADP(+) = 7-cyano-7-deazaguanine + 2 NADPH + 3 H(+). It functions in the pathway tRNA modification; tRNA-queuosine biosynthesis. Its function is as follows. Catalyzes the NADPH-dependent reduction of 7-cyano-7-deazaguanine (preQ0) to 7-aminomethyl-7-deazaguanine (preQ1). The sequence is that of NADPH-dependent 7-cyano-7-deazaguanine reductase from Shewanella sp. (strain MR-4).